The following is a 325-amino-acid chain: 4-hydroxy-3-methylbut-2-enyl diphosphate reductase (325 aa).

Residue Cys-13 coordinates [4Fe-4S] cluster. Residues His-42 and His-76 each contribute to the (2E)-4-hydroxy-3-methylbut-2-enyl diphosphate site. 2 residues coordinate dimethylallyl diphosphate: His-42 and His-76. Residues His-42 and His-76 each contribute to the isopentenyl diphosphate site. Position 98 (Cys-98) interacts with [4Fe-4S] cluster. Residue His-126 coordinates (2E)-4-hydroxy-3-methylbut-2-enyl diphosphate. His-126 provides a ligand contact to dimethylallyl diphosphate. His-126 contacts isopentenyl diphosphate. Residue Glu-128 is the Proton donor of the active site. Thr-169 is a (2E)-4-hydroxy-3-methylbut-2-enyl diphosphate binding site. Residue Cys-230 participates in [4Fe-4S] cluster binding. The (2E)-4-hydroxy-3-methylbut-2-enyl diphosphate site is built by Ser-258, Ser-259, Asn-260, and Ser-306. Ser-258, Ser-259, Asn-260, and Ser-306 together coordinate dimethylallyl diphosphate. 4 residues coordinate isopentenyl diphosphate: Ser-258, Ser-259, Asn-260, and Ser-306.

Belongs to the IspH family. It depends on [4Fe-4S] cluster as a cofactor.

The enzyme catalyses isopentenyl diphosphate + 2 oxidized [2Fe-2S]-[ferredoxin] + H2O = (2E)-4-hydroxy-3-methylbut-2-enyl diphosphate + 2 reduced [2Fe-2S]-[ferredoxin] + 2 H(+). It carries out the reaction dimethylallyl diphosphate + 2 oxidized [2Fe-2S]-[ferredoxin] + H2O = (2E)-4-hydroxy-3-methylbut-2-enyl diphosphate + 2 reduced [2Fe-2S]-[ferredoxin] + 2 H(+). Its pathway is isoprenoid biosynthesis; dimethylallyl diphosphate biosynthesis; dimethylallyl diphosphate from (2E)-4-hydroxy-3-methylbutenyl diphosphate: step 1/1. It participates in isoprenoid biosynthesis; isopentenyl diphosphate biosynthesis via DXP pathway; isopentenyl diphosphate from 1-deoxy-D-xylulose 5-phosphate: step 6/6. Its function is as follows. Catalyzes the conversion of 1-hydroxy-2-methyl-2-(E)-butenyl 4-diphosphate (HMBPP) into a mixture of isopentenyl diphosphate (IPP) and dimethylallyl diphosphate (DMAPP). Acts in the terminal step of the DOXP/MEP pathway for isoprenoid precursor biosynthesis. The sequence is that of 4-hydroxy-3-methylbut-2-enyl diphosphate reductase from Chlorobium phaeobacteroides (strain BS1).